Here is a 751-residue protein sequence, read N- to C-terminus: Semaphorin-3C (751 aa).

Positions 1–21 (MAFRTICVLVGVFICSICVKG) are cleaved as a signal peptide. One can recognise a Sema domain in the interval 28 to 511 (RVYLTFDELR…SNEGVSQVSL (484 aa)). A glycan (N-linked (GlcNAc...) asparagine) is linked at N81. A disulfide bridge links C101 with C112. An N-linked (GlcNAc...) asparagine glycan is attached at N123. The cysteines at positions 130 and 139 are disulfide-linked. N-linked (GlcNAc...) asparagine glycans are attached at residues N252 and N268. 2 disulfide bridges follow: C266/C378 and C290/C338. N465 is a glycosylation site (N-linked (GlcNAc...) asparagine). C514 and C532 are oxidised to a cystine. One can recognise an Ig-like C2-type domain in the interval 571–655 (AYRNAAEIVQ…TENSFKQTIA (85 aa)). Residues N585 and N586 are each glycosylated (N-linked (GlcNAc...) asparagine). A disulfide bridge connects residues C592 and C643. Residues 712 to 731 (TRQQHQQGDESQKMRGDYGK) show a composition bias toward basic and acidic residues. The interval 712-751 (TRQQHQQGDESQKMRGDYGKLKALINSRKSRNRRNQLPES) is disordered.

This sequence belongs to the semaphorin family. In terms of assembly, interacts with PLXND1.

It is found in the secreted. Functionally, binds to plexin family members and plays an important role in the regulation of developmental processes. Required for normal cardiovascular development during embryogenesis. Functions as attractant for growing axons, and thereby plays an important role in axon growth and axon guidance. The protein is Semaphorin-3C (SEMA3C) of Pongo abelii (Sumatran orangutan).